A 137-amino-acid chain; its full sequence is ER-derived vesicles protein erv14 (137 aa).

Residues 1 to 9 (MMSFGSFVY) lie on the Cytoplasmic side of the membrane. A helical transmembrane segment spans residues 10–30 (IACLLLNGANMLLQIFCVIMF). Residues 31-62 (SDLEMDYINPIDLCNKLNDLVMPEIISHTLVT) are Extracellular-facing. The chain crosses the membrane as a helical span at residues 63–83 (LLLLLGKKWLLFLANLPLLVF). Over 84–114 (HANQVIHKTHILDATEIFRQLGRHKRDNFIK) the chain is Cytoplasmic. The helical transmembrane segment at 115–135 (VTFYLIMFFTLLYCMVMSLIQ) threads the bilayer. The Extracellular segment spans residues 136-137 (EE).

This sequence belongs to the cornichon family.

It localises to the endoplasmic reticulum. The protein resides in the membrane. Its subcellular location is the golgi apparatus membrane. Its function is as follows. Regulates export of the secretory proteins from the endoplasmic reticulum in COPII-coated vesicles. This Schizosaccharomyces pombe (strain 972 / ATCC 24843) (Fission yeast) protein is ER-derived vesicles protein erv14 (erv14).